Reading from the N-terminus, the 415-residue chain is Corticotropin-releasing factor receptor 1 (415 aa).

The first 24 residues, 1–24, serve as a signal peptide directing secretion; it reads MLLAKTPCLLLVQVIAAGISFALT. At 25-111 the chain is on the extracellular side; sequence SLQDQCETLQ…CQEILKQEKK (87 aa). 3 disulfides stabilise this stretch: C30-C54, C44-C87, and C68-C102. N-linked (GlcNAc...) asparagine glycans are attached at residues N38, N45, N78, and N90. Residues 112–142 traverse the membrane as a helical segment; the sequence is TKVHYHIAIVINFLGHSISLCALLVAFILFL. Residues 143–149 lie on the Cytoplasmic side of the membrane; it reads RLRSIRC. Residues 150–174 traverse the membrane as a helical segment; that stretch reads LRNIIHWNLITAFILRNVTWFVMQL. Topologically, residues 175–189 are extracellular; it reads TLSHEAHDSNVVWCR. Residues C188 and C258 are joined by a disulfide bond. Residues 190 to 218 form a helical membrane-spanning segment; sequence LVTIAHNYFYVTNFFWMFGEGCYLHTAIV. The Cytoplasmic segment spans residues 219 to 225; it reads LTYSTDK. Residues 226 to 253 traverse the membrane as a helical segment; sequence LRKWMFICIGWCIPFPIIVAWAIGKLYY. The Extracellular portion of the chain corresponds to 254–269; sequence DNEKCWFGKKAGVYTD. The helical transmembrane segment at 270–295 threads the bilayer; that stretch reads FIYQGPVILVLLINFIFLFNIVRILM. The Cytoplasmic segment spans residues 296 to 306; it reads TKLRASTTSET. The helical transmembrane segment at 307-331 threads the bilayer; the sequence is IQYRKAVKATLVLLPLLGITYMLFF. Residues 332-338 are Extracellular-facing; it reads VTPGEDE. Residues 339–368 form a helical membrane-spanning segment; that stretch reads ISRIVFIYFNSFLQSFQGFFVSVFYCFLNS. At 369 to 415 the chain is on the cytoplasmic side; sequence EVRSAVRKRWHRWQDKHSIRARVARAMSIPTSPTRISFHSIKQSSAI.

It belongs to the G-protein coupled receptor 2 family. As to quaternary structure, interacts (via N-terminal extracellular domain) with CRF and UCN.

It localises to the cell membrane. Its function is as follows. G-protein coupled receptor for CRH (corticotropin-releasing factor) and UCN (urocortin). Has high affinity for CRH and UCN. Ligand binding causes a conformation change that triggers signaling via guanine nucleotide-binding proteins (G proteins) and down-stream effectors, such as adenylate cyclase. Promotes the activation of adenylate cyclase, leading to increased intracellular cAMP levels. This chain is Corticotropin-releasing factor receptor 1 (crhr1), found in Xenopus laevis (African clawed frog).